A 184-amino-acid polypeptide reads, in one-letter code: dCTP deaminase (184 aa).

107-112 (KSTYAR) contributes to the dCTP binding site. Glu-133 (proton donor/acceptor) is an active-site residue. Gln-152, Tyr-166, and Gln-176 together coordinate dCTP.

This sequence belongs to the dCTP deaminase family. In terms of assembly, homotrimer.

It carries out the reaction dCTP + H2O + H(+) = dUTP + NH4(+). It functions in the pathway pyrimidine metabolism; dUMP biosynthesis; dUMP from dCTP (dUTP route): step 1/2. Its function is as follows. Catalyzes the deamination of dCTP to dUTP. This is dCTP deaminase from Herpetosiphon aurantiacus (strain ATCC 23779 / DSM 785 / 114-95).